A 223-amino-acid polypeptide reads, in one-letter code: Lipoprotein-releasing system ATP-binding protein LolD (223 aa).

The ABC transporter domain maps to 1–223; the sequence is MAKVFRSGST…DEVEPQSLPA (223 aa). Residue 32-39 coordinates ATP; the sequence is GDSGSGKS.

It belongs to the ABC transporter superfamily. Lipoprotein translocase (TC 3.A.1.125) family. As to quaternary structure, the complex is composed of two ATP-binding proteins (LolD) and two transmembrane proteins (LolC and LolE).

The protein resides in the cell inner membrane. In terms of biological role, part of the ABC transporter complex LolCDE involved in the translocation of mature outer membrane-directed lipoproteins, from the inner membrane to the periplasmic chaperone, LolA. Responsible for the formation of the LolA-lipoprotein complex in an ATP-dependent manner. This Koribacter versatilis (strain Ellin345) protein is Lipoprotein-releasing system ATP-binding protein LolD.